We begin with the raw amino-acid sequence, 642 residues long: Serine/threonine-protein kinase pakA (642 aa).

Composition is skewed to polar residues over residues 1–12 and 38–48; these read MSLKKQQQQSDF and LRQSASFTALN. The disordered stretch occupies residues 1 to 82; that stretch reads MSLKKQQQQS…GFGTKPRRKN (82 aa). Positions 100–113 constitute a CRIB domain; that stretch reads ISAPENPVHVTHVG. 2 disordered regions span residues 180–276 and 317–338; these read GEYP…PIPE and QLDR…RTRQ. Low complexity-rich tracts occupy residues 217-227 and 254-266; these read SQSSPVPVLSS and VVSN…RPAN. The 252-residue stretch at 361 to 612 folds into the Protein kinase domain; it reads YYNLNKIGQG…AHDLLKHPFM (252 aa). ATP contacts are provided by residues 367–375 and K390; that span reads IGQGASGGV. Residue D480 is the Proton acceptor of the active site.

It belongs to the protein kinase superfamily. STE Ser/Thr protein kinase family. STE20 subfamily.

The protein localises to the cytoplasm. Its subcellular location is the nucleus. The enzyme catalyses L-seryl-[protein] + ATP = O-phospho-L-seryl-[protein] + ADP + H(+). It catalyses the reaction L-threonyl-[protein] + ATP = O-phospho-L-threonyl-[protein] + ADP + H(+). Functionally, MAP4K component of the MAPK pathway required for the mating pheromone response and the regulation of cell polarity and cell cycle. This Talaromyces marneffei (Penicillium marneffei) protein is Serine/threonine-protein kinase pakA (pakA).